We begin with the raw amino-acid sequence, 293 residues long: Phospholipid scramblase 2 (293 aa).

The disordered stretch occupies residues 1 to 39 (MDKQNVQMNPPHPGTNLTGPPGHIGYPGPQAGYAVPPPG). Residues 1-66 (MDKQNVQMNP…GHPGAPTQVP (66 aa)) are proline-rich domain (PRD). Over 1–270 (MDKQNVQMNP…IQFPLDLDVK (270 aa)) the chain is Cytoplasmic. T143 bears the Phosphothreonine; by PKC mark. S-palmitoyl cysteine attachment occurs at residues C166, C167, C170, and C171. The helical transmembrane segment at 271 to 287 (MKAVMLGACFLIDFMFF) threads the bilayer. Over 288–293 (EMTRGE) the chain is Extracellular.

It belongs to the phospholipid scramblase family. Requires Ca(2+) as cofactor.

The protein resides in the membrane. It carries out the reaction a 1,2-diacyl-sn-glycero-3-phosphocholine(in) = a 1,2-diacyl-sn-glycero-3-phosphocholine(out). Functionally, may catalyze calcium-induced ATP-independent rapid bidirectional and non-specific movement of phospholipids (lipid scrambling or lipid flip-flop) between the inner and outer leaflet of the plasma membrane. The protein is Phospholipid scramblase 2 of Bos taurus (Bovine).